A 233-amino-acid chain; its full sequence is Superoxide dismutase [Mn] 3.3, mitochondrial (233 aa).

The transit peptide at 1-29 (MALRTLASKNALSFALGGAARPSAESARG) directs the protein to the mitochondrion. Residues H57, H105, D194, and H198 each coordinate Mn(2+).

This sequence belongs to the iron/manganese superoxide dismutase family. Homotetramer. The cofactor is Mn(2+). Predominantly expressed in the embryo late in embryogenesis.

Its subcellular location is the mitochondrion matrix. The enzyme catalyses 2 superoxide + 2 H(+) = H2O2 + O2. In terms of biological role, destroys superoxide anion radicals which are normally produced within the cells and which are toxic to biological systems. The polypeptide is Superoxide dismutase [Mn] 3.3, mitochondrial (SODA.2) (Zea mays (Maize)).